The primary structure comprises 160 residues: Large ribosomal subunit protein uL16 (160 aa).

Belongs to the universal ribosomal protein uL16 family. As to quaternary structure, part of the 50S ribosomal subunit.

In terms of biological role, binds 23S rRNA and is also seen to make contacts with the A and possibly P site tRNAs. This is Large ribosomal subunit protein uL16 from Prochlorococcus marinus (strain MIT 9301).